Reading from the N-terminus, the 321-residue chain is MVYSDSHLKLFALNSNPGLAEKISQFTGVPLGKLSSKQFSDGEIMINMEESVRSQDIFIVQSTSCPVNDHLWELLIMIDACKRASARTINVVIPYFGYARQDRTATSREPITAKLVADMIVKAGADRLLTLDIHAVQVQGFFDIPVDNLFTVPLFADYYRKSGLFGDDVIVVAPKNSGIKRARSLAEYLESAIAIVDYEDDDKNRENGYVIGNVSGKKVILIDDILNTGVTFANAANVVREAGASEIYAVASHGLFTSGAADVLEKVDIKEILVTDSVVTNHRKPLNVKYLSAAEYLASAILRIHEGRPVSPLFEHEKPQD.

ATP is bound by residues 41–43 and 100–101; these read DGE and RQ. Residue His134 coordinates Mg(2+). D-ribose 5-phosphate-binding positions include Asp223 and 227–231; that span reads NTGVT.

The protein belongs to the ribose-phosphate pyrophosphokinase family. Class I subfamily. Homohexamer. It depends on Mg(2+) as a cofactor.

It is found in the cytoplasm. The enzyme catalyses D-ribose 5-phosphate + ATP = 5-phospho-alpha-D-ribose 1-diphosphate + AMP + H(+). The protein operates within metabolic intermediate biosynthesis; 5-phospho-alpha-D-ribose 1-diphosphate biosynthesis; 5-phospho-alpha-D-ribose 1-diphosphate from D-ribose 5-phosphate (route I): step 1/1. Involved in the biosynthesis of the central metabolite phospho-alpha-D-ribosyl-1-pyrophosphate (PRPP) via the transfer of pyrophosphoryl group from ATP to 1-hydroxyl of ribose-5-phosphate (Rib-5-P). This is Putative ribose-phosphate pyrophosphokinase 2 from Lactococcus lactis subsp. lactis (strain IL1403) (Streptococcus lactis).